A 682-amino-acid polypeptide reads, in one-letter code: Potassium-transporting ATPase ATP-binding subunit (682 aa).

The next 4 membrane-spanning stretches (helical) occupy residues 34 to 54, 58 to 78, 219 to 239, and 254 to 274; these read PVMF…LAMV, IAGS…TVLF, IALT…TATL, and VLVA…LSAI. The 4-aspartylphosphate intermediate role is filled by aspartate 307. Residues aspartate 344, glutamate 348, 377–384, and lysine 395 each bind ATP; that span reads FTAQSRMS. Residues aspartate 518 and aspartate 522 each contribute to the Mg(2+) site. A run of 3 helical transmembrane segments spans residues 588–608, 616–636, and 662–682; these read FAII…LNVM, AILS…PLAL, and LVVP…LGLA.

This sequence belongs to the cation transport ATPase (P-type) (TC 3.A.3) family. Type IA subfamily. As to quaternary structure, the system is composed of three essential subunits: KdpA, KdpB and KdpC.

Its subcellular location is the cell inner membrane. The catalysed reaction is K(+)(out) + ATP + H2O = K(+)(in) + ADP + phosphate + H(+). Functionally, part of the high-affinity ATP-driven potassium transport (or Kdp) system, which catalyzes the hydrolysis of ATP coupled with the electrogenic transport of potassium into the cytoplasm. This subunit is responsible for energy coupling to the transport system and for the release of the potassium ions to the cytoplasm. This is Potassium-transporting ATPase ATP-binding subunit from Salmonella enteritidis PT4 (strain P125109).